The sequence spans 242 residues: Phosphoribosylaminoimidazole-succinocarboxamide synthase (242 aa).

This sequence belongs to the SAICAR synthetase family.

It carries out the reaction 5-amino-1-(5-phospho-D-ribosyl)imidazole-4-carboxylate + L-aspartate + ATP = (2S)-2-[5-amino-1-(5-phospho-beta-D-ribosyl)imidazole-4-carboxamido]succinate + ADP + phosphate + 2 H(+). It participates in purine metabolism; IMP biosynthesis via de novo pathway; 5-amino-1-(5-phospho-D-ribosyl)imidazole-4-carboxamide from 5-amino-1-(5-phospho-D-ribosyl)imidazole-4-carboxylate: step 1/2. The sequence is that of Phosphoribosylaminoimidazole-succinocarboxamide synthase from Magnetococcus marinus (strain ATCC BAA-1437 / JCM 17883 / MC-1).